The following is a 59-amino-acid chain: UPF0391 membrane protein lpl2443 (59 aa).

2 helical membrane-spanning segments follow: residues 5–25 and 30–50; these read ALIF…GIAV and IAKI…IMGL.

The protein belongs to the UPF0391 family.

It is found in the cell membrane. In Legionella pneumophila (strain Lens), this protein is UPF0391 membrane protein lpl2443.